Consider the following 141-residue polypeptide: Hemoglobin subunit alpha (141 aa).

The Globin domain maps to Val-1–Arg-141. His-58 contacts O2. His-87 is a binding site for heme b.

This sequence belongs to the globin family. As to quaternary structure, heterotetramer of two alpha chains and two beta chains. In terms of tissue distribution, red blood cells.

Functionally, involved in oxygen transport from the lung to the various peripheral tissues. This is Hemoglobin subunit alpha (HBA) from Psittacula krameri (Rose-ringed parakeet).